A 1368-amino-acid polypeptide reads, in one-letter code: MAVAEAKPQYSHAEKKRFRKSFGKQTDIMPIPNLLEIQLKSYRDFLQTDTKLSEQLNTGLHAAFSSVFPIESFSGNARLEYVGYKLGEPAFDVRECKLRGLTYSAPLRVKIRLVVLDKDASDDPKPIKDIREQDVFMGEIPLMTDVGTFVVNGTERVVVSQLHRSPGVIFEHDKGKTHSSGKLLYSARIIPYRGSWLDFEFDPKDCVYVRIDRRRKLPVTILLRALGYEAEDILSEFFETTHCHLKNGEYHIDLIPQRLRGEIASFDIHVPETGELIVEQGRRITARHIKQMEKSQMQDLVVPRDYLIGKTLAKNIIDTSTGEFLAQANDEITEELLDAMANHGILQIDMIYTNDLDHGSYISDTLKIDPTGSQLEALVEIYRMMRPGEPPTKEAAEALFKNLFFVEERYDLSAVGRMKFNRRVGIKSDEGPGTLTKEDILSVIKTLIDIRNGIGMVDDIDHLGNRRVRSVGEMTENQFRVGLVRVERAVKERLSLVESENLMPQDLINAKPVSAAIKEFFGSSQLSQFMDQVNPLSGVTHKRRVSALGPGGLTRERAGFEVRDVHTTHYGRVCPIETPEGPNIGLINSLSVYARTNEYGFIETPCRKVVNGRVTDEVEYLSAIEEVDQYIAQSNVELDAQGNILADLVPCRHQNEFSLTTPDKINYMDVSPKQIVSVAASLIPFLEHDDANRALMGSNMQRQAVPTLRSEKPLVGTGMERIVASDSGVSVVAKRGGVIDLVDASRIVVRVNDDETTAGETGVDIYNLTKYFRSNQDTCINQRPIVSTGDRIQRGDVLADGPCTDMGELALGQNLLVAFMPWNGYNFEDSILISERIVHDDRFTTIHIEELTCIARDTKLGTEEITADIPNVGESALSNLDESGVVYIGAEVKAGDILVGKVTPKGETQLTPEEKLLRAIFGEKASDVKDSSLRVPSGMNGTVIDVQVFTRDGLEKDARAKSIEEEHLARVRKDLIDERRIREEDIYHRVSHLLLDKVATGGPGSLKPGSKITQDYLDKVEREKWFDIRIEDDAISQQLEQLSKQLELLTKEMEKRFNDSRKKIIQGDDLAPGVLKIVKVYLAVKRRIQPGDKMAGRHGNKGVISIVVPVEDMPHMEDGTAVDIVLNPLGVPSRMNIGQVLETHLGLAAKGLGRKIAQMLDEKQTPEAIKAYLEKIYNHDGVQRVNLKCLNDDELMTLADNLRAGVPMATPVFDGATEQEIKSMLQLADLPADGKTVLIDGRTGNKFDNPVTVGYMYMLKLNHLVDDKMHARSTGSYSLVTQQPLGGKAQFGGQRFGEMEVWALEAYGAAYTLQEMLTVKSDDVGGRTKIYKNIVDGDHRMDPGMPESFNVLLKEIRALGIDIELEHD.

It belongs to the RNA polymerase beta chain family. In terms of assembly, the RNAP catalytic core consists of 2 alpha, 1 beta, 1 beta' and 1 omega subunit. When a sigma factor is associated with the core the holoenzyme is formed, which can initiate transcription.

It catalyses the reaction RNA(n) + a ribonucleoside 5'-triphosphate = RNA(n+1) + diphosphate. Its function is as follows. DNA-dependent RNA polymerase catalyzes the transcription of DNA into RNA using the four ribonucleoside triphosphates as substrates. The polypeptide is DNA-directed RNA polymerase subunit beta (Legionella pneumophila subsp. pneumophila (strain Philadelphia 1 / ATCC 33152 / DSM 7513)).